The chain runs to 229 residues: Prolactin (229 aa).

A signal peptide spans 1–30 (MDKKGWSLKGSLLPLLLLVSDLLLCQSVAS). C34 and C41 are joined by a disulfide. Residues S56, S64, and S120 each carry the phosphoserine modification. Cystine bridges form between C88-C204 and C221-C229.

It belongs to the somatotropin/prolactin family. In terms of assembly, interacts with PRLR.

Its subcellular location is the secreted. Prolactin acts primarily on the mammary gland by promoting lactation. This chain is Prolactin (PRL), found in Ailuropoda melanoleuca (Giant panda).